Consider the following 491-residue polypeptide: Cytochrome P450 monooxygenase olcB (491 aa).

The chain crosses the membrane as a helical span at residues 5–27; sequence LLLSLSVCLLYVFITAFWNLYIH. Heme is bound at residue Cys435.

Belongs to the cytochrome P450 family. Requires heme as cofactor.

It localises to the membrane. The protein operates within secondary metabolite biosynthesis; terpenoid biosynthesis. Cytochrome P450 monooxygenase; part of the gene cluster that mediates the biosynthesis of 15-deoxyoxalicine B. The first step of the pathway is the synthesis of nicotinyl-CoA from nicotinic acid by the nicotinic acid-CoA ligase olcI. Nicotinyl-CoA is then a substrate of polyketide synthase olcA to produce 4-hydroxy-6-(3-pyridinyl)-2H-pyran-2-one (HPPO) which is further prenylated by the polyprenyl transferase olcH to yield geranylgeranyl-HPPO. Geranylgeranyl pyrophosphate is provided by the cluster-specific geranylgeranyl pyrophosphate synthase olcC. The FAD-dependent monooxygenase olcE catalyzes the epoxidation of geranylgeranyl-HPPO and the terpene cyclase olcD catalyzes the cyclization of the terpenoid component, resulting in the formation of the tricyclic terpene moiety seen in predecaturin E. The cytochrome P450 monooxygenase then catalyzes the allylic oxidation of predecaturin E, which is followed by spirocylization with concomitant loss of one molecule of water to form decaturin E. Decaturin E is the substrate of the cytochrome P450 monooxygenase olcJ which hydroxylates it at the C-29 position to form decaturin F. The short-chain dehydrogenase/reductase olcF may catalyze the oxidation of decaturin F to generate the 29-hydroxyl-27-one intermediate, and subsequent hemiacetal formation probably leads to the formation of decaturin C. The dioxygenase olcK may be a peroxisomal enzyme that catalyzes the hydroxylation of decaturin C into decaturin A once decaturin C is shuttled into the peroxisome by the MFS transporter olcL. Finally the cytochrome P450 monooxygenase olcB catalyzes the oxidative rearrangement to yield 15-deoxyoxalicine B. In the absence of olcJ, decaturin E may be shunted to a pathway in which it is oxidized to a ketone, possibly by olcF, to form decaturin D, which undergoes further allylic oxidation to yield decaturin G. Moreover, in the absence of oclK or oclL, oclB can convert decaturin C into 15-deoxyoxalicine A. This Penicillium canescens protein is Cytochrome P450 monooxygenase olcB.